A 712-amino-acid chain; its full sequence is Anaerobic ribonucleoside-triphosphate reductase (712 aa).

Positions 3-92 constitute an ATP-cone domain; the sequence is PHVMKRDGCK…EYRHDRDIER (90 aa). One can recognise a Glycine radical domain in the interval 583–708; the sequence is KKVNPYDKID…VKRRVKHLGN (126 aa). 4 residues coordinate Zn(2+): Cys-644, Cys-647, Cys-662, and Cys-665. At Gly-681 the chain carries Glycine radical.

It belongs to the anaerobic ribonucleoside-triphosphate reductase family. As to quaternary structure, homodimer. Forms a tetramer composed of two NrdD and two NrdG subunits.

It carries out the reaction a ribonucleoside 5'-triphosphate + formate + H(+) = a 2'-deoxyribonucleoside 5'-triphosphate + CO2 + H2O. It catalyses the reaction formate + ATP + H(+) = dATP + CO2 + H2O. The enzyme catalyses CTP + formate + H(+) = dCTP + CO2 + H2O. The catalysed reaction is GTP + formate + H(+) = dGTP + CO2 + H2O. It carries out the reaction UTP + formate + H(+) = dUTP + CO2 + H2O. With respect to regulation, activated under anaerobic conditions by NrdG, a tightly associated activase. Activation involves the formation of a glycyl radical at Gly-681. Exposure of the activated reductase to oxygen leads to C-terminal truncation and inactivation of the protein, by cleavage at the N-terminal side of Gly-681. The presence of zinc protects the protein from proteolysis and prevents the formation of disulfide bridges within it. The enzyme shows a basal activity in the absence of any effector, but reduction is stimulated up to 10-fold by an appropriate modulator (dGTP for ATP reduction, ATP for CTP and UTP reduction, and dTTP for GTP reduction). dGTP and dTTP inhibit the reduction of the incorrect substrate, and dATP inhibits reduction of all four. These modulators act as allosteric effectors. Its function is as follows. Catalyzes the conversion of ribonucleotides into deoxyribonucleotides, which are required for DNA synthesis and repair. Can reduce each of the four common ribonucleoside triphosphates. In Escherichia coli (strain K12), this protein is Anaerobic ribonucleoside-triphosphate reductase.